A 117-amino-acid chain; its full sequence is G antigen 12H (117 aa).

Residues 1-117 form a disordered region; that stretch reads MSWRGRSTYY…PEEGEKQSQC (117 aa). Acidic residues-rich tracts occupy residues 32-45 and 87-96; these read FSDE…EEGE and ECEDGPDGQE. Over residues 103–117 the composition is skewed to basic and acidic residues; the sequence is EEVKTPEEGEKQSQC.

This sequence belongs to the GAGE family.

The polypeptide is G antigen 12H (GAGE12H) (Homo sapiens (Human)).